We begin with the raw amino-acid sequence, 262 residues long: Global transcriptional regulator CodY (262 aa).

Residues 1 to 159 are GAF domain; it reads MATLLEKTRK…ATTVIGVQLS (159 aa). The H-T-H motif DNA-binding region spans 207–226; sequence ASVIADKIGITRSVIVNALR.

This sequence belongs to the CodY family.

It is found in the cytoplasm. DNA-binding global transcriptional regulator which is involved in the adaptive response to starvation and acts by directly or indirectly controlling the expression of numerous genes in response to nutrient availability. During rapid exponential growth, CodY is highly active and represses genes whose products allow adaptation to nutrient depletion. In Lactococcus lactis subsp. cremoris (strain SK11), this protein is Global transcriptional regulator CodY.